The chain runs to 481 residues: Proline--tRNA ligase (481 aa).

Belongs to the class-II aminoacyl-tRNA synthetase family. ProS type 3 subfamily. As to quaternary structure, homodimer.

It is found in the cytoplasm. The catalysed reaction is tRNA(Pro) + L-proline + ATP = L-prolyl-tRNA(Pro) + AMP + diphosphate. Its function is as follows. Catalyzes the attachment of proline to tRNA(Pro) in a two-step reaction: proline is first activated by ATP to form Pro-AMP and then transferred to the acceptor end of tRNA(Pro). The sequence is that of Proline--tRNA ligase from Thermococcus kodakarensis (strain ATCC BAA-918 / JCM 12380 / KOD1) (Pyrococcus kodakaraensis (strain KOD1)).